Here is a 345-residue protein sequence, read N- to C-terminus: Tyrosine-binding protein (345 aa).

The N-terminal stretch at 1-23 (MIKSKKILSLIIAGVLGVSMLTG) is a signal peptide. Cysteine 24 is lipidated: N-palmitoyl cysteine. Residue cysteine 24 is the site of S-diacylglycerol cysteine attachment.

As to quaternary structure, the complex is probably composed of two ATP-binding proteins (CDR20291_0806), two transmembrane proteins (CDR20291_0807) and a solute-binding protein (CDR20291_0805).

The protein resides in the cell membrane. Its function is as follows. Probably part of an ABC transporter complex involved in tyrosine uptake. May also import phenylalanine. The polypeptide is Tyrosine-binding protein (Clostridioides difficile (strain R20291) (Peptoclostridium difficile)).